Here is a 423-residue protein sequence, read N- to C-terminus: Methanol:N,N-dimethyl-4-nitrosoaniline oxidoreductase (423 aa).

This sequence belongs to the iron-containing alcohol dehydrogenase family. As to quaternary structure, homodecamer. Requires Mg(2+) as cofactor. It depends on Zn(2+) as a cofactor. NADPH serves as cofactor.

The catalysed reaction is methanol + A = formaldehyde + AH2. Its function is as follows. Catalyzes the oxidation of methanol to yield formaldehyde. While the in vivo electron acceptor is not known, N,N-dimethyl-4-nitrosoaniline (NDMA) can serve this function in vitro and is reduced to 4-(hydroxylamino)-N,N-dimethylaniline. It is also able to use ethanol and formaldehyde with an activity comparable to methanol, and has a weak activity with methylamine as substrate. This Mycobacterium sp. (strain DSM 3803 / JC1) protein is Methanol:N,N-dimethyl-4-nitrosoaniline oxidoreductase.